We begin with the raw amino-acid sequence, 557 residues long: Glucose-6-phosphate isomerase (557 aa).

Alanine 2 is modified (N-acetylalanine). Residue lysine 12 is modified to N6-acetyllysine. Phosphoserine is present on serine 107. Lysine 142 bears the N6-acetyllysine mark. 159–160 is a D-glucose 6-phosphate binding site; sequence GS. Serine 185 carries the post-translational modification Phosphoserine; by CK2. 210-215 contacts D-glucose 6-phosphate; that stretch reads SKTFTT. Threonine 250 carries the phosphothreonine modification. D-glucose 6-phosphate-binding residues include glutamine 354, glutamate 358, and histidine 389. Residue glutamate 358 is the Proton donor of the active site. Histidine 389 is a catalytic residue. Serine 455 bears the Phosphoserine mark. Lysine 519 contributes to the D-glucose 6-phosphate binding site. Residue lysine 519 is part of the active site.

This sequence belongs to the GPI family. As to quaternary structure, homodimer; in the catalytically active form. Monomer in the secreted form. Post-translationally, phosphorylation at Ser-185 by CK2 has been shown to decrease enzymatic activity and may contribute to secretion by a non-classical secretory pathway. In terms of processing, ISGylated.

It is found in the cytoplasm. Its subcellular location is the secreted. It carries out the reaction alpha-D-glucose 6-phosphate = beta-D-fructose 6-phosphate. It functions in the pathway carbohydrate degradation; glycolysis; D-glyceraldehyde 3-phosphate and glycerone phosphate from D-glucose: step 2/4. Functionally, in the cytoplasm, catalyzes the conversion of glucose-6-phosphate to fructose-6-phosphate, the second step in glycolysis, and the reverse reaction during gluconeogenesis. Besides it's role as a glycolytic enzyme, also acts as a secreted cytokine: acts as an angiogenic factor (AMF) that stimulates endothelial cell motility. Acts as a neurotrophic factor, neuroleukin, for spinal and sensory neurons. It is secreted by lectin-stimulated T-cells and induces immunoglobulin secretion. The chain is Glucose-6-phosphate isomerase from Bos taurus (Bovine).